Reading from the N-terminus, the 603-residue chain is Probable GMP synthase [glutamine-hydrolyzing] (603 aa).

The Glutamine amidotransferase type-1 domain occupies 6–195 (KIAVVDFGGQ…FIQICGVSKT (190 aa)). The active-site Nucleophile is the C81. Residues H170 and E172 contribute to the active site. Positions 196-392 (WGIDQFLKEK…LGLESEWVGR (197 aa)) constitute a GMPS ATP-PPase domain. 224-230 (SGGVDST) lines the ATP pocket.

Homodimer.

The catalysed reaction is XMP + L-glutamine + ATP + H2O = GMP + L-glutamate + AMP + diphosphate + 2 H(+). It participates in purine metabolism; GMP biosynthesis; GMP from XMP (L-Gln route): step 1/1. Functionally, catalyzes the synthesis of GMP from XMP. The polypeptide is Probable GMP synthase [glutamine-hydrolyzing] (guaA) (Leptospira interrogans serogroup Icterohaemorrhagiae serovar copenhageni (strain Fiocruz L1-130)).